The sequence spans 504 residues: Cytochrome P450 7A1 (504 aa).

A helical membrane pass occupies residues 4-24 (TSLIWGIAIAACCCLWLILGI). C444 contacts heme.

It belongs to the cytochrome P450 family. Heme serves as cofactor. As to expression, detected in liver.

Its subcellular location is the endoplasmic reticulum membrane. The protein localises to the microsome membrane. The enzyme catalyses cholesterol + reduced [NADPH--hemoprotein reductase] + O2 = 7alpha-hydroxycholesterol + oxidized [NADPH--hemoprotein reductase] + H2O + H(+). It catalyses the reaction 4beta-hydroxycholesterol + reduced [NADPH--hemoprotein reductase] + O2 = 4beta,7alpha-dihydroxycholesterol + oxidized [NADPH--hemoprotein reductase] + H2O + H(+). The catalysed reaction is lathosterol + reduced [NADPH--hemoprotein reductase] + O2 = 7alpha,8alpha-epoxy-5alpha-cholestan-3beta-ol + oxidized [NADPH--hemoprotein reductase] + H2O + H(+). It carries out the reaction lathosterol + reduced [NADPH--hemoprotein reductase] + O2 = 5alpha-cholestan-7-oxo-3beta-ol + oxidized [NADPH--hemoprotein reductase] + H2O + H(+). The enzyme catalyses 7-dehydrocholesterol + reduced [NADPH--hemoprotein reductase] + O2 = 7-oxocholesterol + oxidized [NADPH--hemoprotein reductase] + H2O + H(+). It catalyses the reaction (24S)-hydroxycholesterol + reduced [NADPH--hemoprotein reductase] + O2 = (24S)-7alpha-dihydroxycholesterol + oxidized [NADPH--hemoprotein reductase] + H2O + H(+). The catalysed reaction is (24R)-hydroxycholesterol + reduced [NADPH--hemoprotein reductase] + O2 = (24R)-7alpha-dihydroxycholesterol + oxidized [NADPH--hemoprotein reductase] + H2O + H(+). The protein operates within lipid metabolism; bile acid biosynthesis. It functions in the pathway steroid metabolism; cholesterol degradation. Functionally, a cytochrome P450 monooxygenase involved in the metabolism of endogenous cholesterol and its oxygenated derivatives (oxysterols). Mechanistically, uses molecular oxygen inserting one oxygen atom into a substrate, and reducing the second into a water molecule, with two electrons provided by NADPH via cytochrome P450 reductase (CPR; NADPH-ferrihemoprotein reductase). Functions as a critical regulatory enzyme of bile acid biosynthesis and cholesterol homeostasis. Catalyzes the hydroxylation of carbon hydrogen bond at 7-alpha position of cholesterol, a rate-limiting step in cholesterol catabolism and bile acid biosynthesis. 7-alpha hydroxylates several oxysterols, including 4beta-hydroxycholesterol and 24-hydroxycholesterol. Catalyzes the oxidation of the 7,8 double bond of 7-dehydrocholesterol and lathosterol with direct and predominant formation of the 7-keto derivatives. The sequence is that of Cytochrome P450 7A1 from Homo sapiens (Human).